A 294-amino-acid polypeptide reads, in one-letter code: Probable aspartoacylase (294 aa).

Zn(2+) is bound by residues His14 and Glu17. Substrate is bound by residues Arg56 and 63–64; that span reads NR. Residue His106 coordinates Zn(2+). Substrate is bound by residues Glu164 and Tyr275.

The protein belongs to the AspA/AstE family. Aspartoacylase subfamily. The cofactor is Zn(2+).

It carries out the reaction an N-acyl-L-aspartate + H2O = a carboxylate + L-aspartate. This chain is Probable aspartoacylase, found in Nostoc sp. (strain PCC 7120 / SAG 25.82 / UTEX 2576).